A 438-amino-acid chain; its full sequence is Tol-Pal system protein TolB (438 aa).

The first 36 residues, 1–36 (MTPAFRRADLTGFLRTYGAALILLLAAMLAWQPAQA), serve as a signal peptide directing secretion.

It belongs to the TolB family. As to quaternary structure, the Tol-Pal system is composed of five core proteins: the inner membrane proteins TolA, TolQ and TolR, the periplasmic protein TolB and the outer membrane protein Pal. They form a network linking the inner and outer membranes and the peptidoglycan layer.

It localises to the periplasm. Functionally, part of the Tol-Pal system, which plays a role in outer membrane invagination during cell division and is important for maintaining outer membrane integrity. The protein is Tol-Pal system protein TolB of Bordetella pertussis (strain Tohama I / ATCC BAA-589 / NCTC 13251).